The following is a 210-amino-acid chain: Inner membrane-spanning protein YciB (210 aa).

6 helical membrane-spanning segments follow: residues 19–39 (LVLELGPLMVFFFANSRGDWL), 53–73 (IFIATGLFMAATATALIVSWI), 78–98 (LPMMPLISGIVVFVFGALTLW), 115–135 (LFGAILLGGLLFGKSLLGYVF), 148–168 (KLTIRWGVFFLFLAVLNEIVW), and 175–195 (FWVAFKVWGTMPITILFTLAQ).

The protein belongs to the YciB family.

Its subcellular location is the cell inner membrane. Its function is as follows. Plays a role in cell envelope biogenesis, maintenance of cell envelope integrity and membrane homeostasis. The sequence is that of Inner membrane-spanning protein YciB from Sinorhizobium fredii (strain NBRC 101917 / NGR234).